Here is a 217-residue protein sequence, read N- to C-terminus: Adenylate kinase (217 aa).

Position 10–15 (Gly-10–Thr-15) interacts with ATP. The interval Ser-30–Val-59 is NMP. Residues Thr-31, Arg-36, Ala-57–Val-59, Gly-85–Arg-88, and Gln-92 each bind AMP. The tract at residues Gly-126–Asp-163 is LID. ATP is bound at residue Arg-127. 2 residues coordinate Zn(2+): Cys-130 and Cys-133. Ser-136–Tyr-137 provides a ligand contact to ATP. The Zn(2+) site is built by Cys-150 and Asp-153. Positions 160 and 171 each coordinate AMP. Residue Gln-199 participates in ATP binding.

It belongs to the adenylate kinase family. In terms of assembly, monomer.

The protein localises to the cytoplasm. The enzyme catalyses AMP + ATP = 2 ADP. It functions in the pathway purine metabolism; AMP biosynthesis via salvage pathway; AMP from ADP: step 1/1. Functionally, catalyzes the reversible transfer of the terminal phosphate group between ATP and AMP. Plays an important role in cellular energy homeostasis and in adenine nucleotide metabolism. The chain is Adenylate kinase from Lysinibacillus sphaericus (strain C3-41).